The primary structure comprises 72 residues: Small ribosomal subunit protein bS20 (72 aa).

This sequence belongs to the bacterial ribosomal protein bS20 family.

Its function is as follows. Binds directly to 16S ribosomal RNA. The chain is Small ribosomal subunit protein bS20 (rpsT) from Aeromonas salmonicida.